An 865-amino-acid chain; its full sequence is MPHVDLNPLKQRMQAARAAAVAQFRQHPRPDMLLTELRRIVDQALRELVKLCPLPAGATLAAVGGYGRGELYPHSDVDLLILLPQPPSAADARAVEALVAALWDLGLEPGHSVRTLEDCEREARGDITVETALLESRWLAGSRTLMKRLDSAMQARLDAAVFFQAKRVEMQQRHARYQDTPYALEPNCKESPGGLRDLQVILWMARAAGFGHSWREVAQAGLLTSSEARDLRRAEQAFKRLRIELHLLTGRREDRVLFDLQPGLAAVYGIASTATRRASELLMQRYYWAARLVTQLNVILVQNIEERLFPRPDSDARLIDDDFRNLRERLDIVREDGFERNPTLLLRAFLVMQQHPELIGMSARTLRAIWHSRHRIDAQFRRNPVNRKLFLQILQQPRGIVHELRRMTMLNILPRYLPVFRRIVGQMQHDLFHVYTVDQHTLAVVRNLRRFTMPEHAQEYPLASQLIAGLDRHWLLYVAALFHDIAKGRGGDHSELGAREVRRFAQDHGLDPADAELVEFLVRHHLLMSAVAQKRDLSDPQVVRDFAAQVGDERRLAALYLLTVADIRGTSPRVWNAWKGKLLEDLFRLTLAALGGAHADAHTVLTERKDEAARLTRLAGLRDDAREAFWNQLDIAYFLRHDASEIAWHTRHLYYQVAPDEPVVRVRPTEHGEGLQVMVYTRDAPDLFVTTCGYFDAKSLSVQDARVHTTRHGWALDSFIVLAPEGFADLRAQATLVEHELAERLRDPHAARHAHAPRRLPHSHARRSRVFPVMPQAELSPDERSQSWRLSVTATDRPGLLYALARVFAEHGVDLIMAKIMTLGERVEDVFIVSGSALERPRSQMQFERAILDALAGDEPRQQAA.

Residues 1–318 (MPHVDLNPLK…FPRPDSDARL (318 aa)) are uridylyltransferase. The segment at 319–675 (IDDDFRNLRE…VRPTEHGEGL (357 aa)) is uridylyl-removing. Residues 437-559 (VDQHTLAVVR…VGDERRLAAL (123 aa)) enclose the HD domain. ACT domains are found at residues 676–762 (QVMV…RLPH) and 789–865 (RLSV…QQAA). Residues 747–767 (DPHAARHAHAPRRLPHSHARR) form a disordered region. The segment covering 751–767 (ARHAHAPRRLPHSHARR) has biased composition (basic residues).

The protein belongs to the GlnD family. The cofactor is Mg(2+).

It catalyses the reaction [protein-PII]-L-tyrosine + UTP = [protein-PII]-uridylyl-L-tyrosine + diphosphate. The enzyme catalyses [protein-PII]-uridylyl-L-tyrosine + H2O = [protein-PII]-L-tyrosine + UMP + H(+). Uridylyltransferase (UTase) activity is inhibited by glutamine, while glutamine activates uridylyl-removing (UR) activity. Its function is as follows. Modifies, by uridylylation and deuridylylation, the PII regulatory proteins (GlnB and homologs), in response to the nitrogen status of the cell that GlnD senses through the glutamine level. Under low glutamine levels, catalyzes the conversion of the PII proteins and UTP to PII-UMP and PPi, while under higher glutamine levels, GlnD hydrolyzes PII-UMP to PII and UMP (deuridylylation). Thus, controls uridylylation state and activity of the PII proteins, and plays an important role in the regulation of nitrogen assimilation and metabolism. In Bordetella bronchiseptica (strain ATCC BAA-588 / NCTC 13252 / RB50) (Alcaligenes bronchisepticus), this protein is Bifunctional uridylyltransferase/uridylyl-removing enzyme.